The sequence spans 623 residues: Heterogeneous nuclear ribonucleoprotein Q (623 aa).

Position 2 is an N-acetylalanine (Ala-2). Ser-159 is modified (phosphoserine). 3 RRM domains span residues 162–241 (TEIF…ISVA), 243–325 (NRLF…WADP), and 338–408 (KVLF…FAKP). Lys-168 participates in a covalent cross-link: Glycyl lysine isopeptide (Lys-Gly) (interchain with G-Cter in SUMO2). Lys-221 bears the N6-acetyllysine mark. Lys-363 is subject to N6-acetyllysine. A Phosphotyrosine modification is found at Tyr-373. Residues 400–561 (NIEIVFAKPP…GARGGRGGNV (162 aa)) form an interaction with APOBEC1 region. The residue at position 444 (Arg-444) is an Asymmetric dimethylarginine; by PRMT1; alternate. Arg-444 bears the Omega-N-methylarginine; by PRMT1; alternate mark. 6 tandem repeats follow at residues 448 to 450 (RGG), 451 to 453 (RGG), 460 to 464 (YYGYE), 469 to 472 (YYGY), 478 to 480 (RGG), and 485 to 488 (YYGY). Residues 448–559 (RGGRGGYGYP…VRGARGGRGG (112 aa)) form an 8 X 3 AA repeats of R-G-G region. The tract at residues 460-488 (YYGYEDYYDYYGYDYHNYRGGYEDPYYGY) is 3 X 4 AA repeats of Y-Y-G-Y. Arg-496 bears the Omega-N-methylarginine; by PRMT1 mark. The tract at residues 497–623 (GRGGRGARGA…YQDTFGQQWK (127 aa)) is disordered. One copy of the 1-4 repeat lies at 498–500 (RGG). Positions 504–522 (RGAAPSRGRGAAPPRGRAG) are enriched in low complexity. Arg-510 carries the post-translational modification Asymmetric dimethylarginine; by PRMT1. Asymmetric dimethylarginine; by PRMT1; alternate occurs at positions 518, 526, 536, and 539. An omega-N-methylarginine; by PRMT1; alternate mark is found at Arg-518, Arg-526, Arg-536, and Arg-539. The interval 518 to 549 (RGRAGYSQRGGPGSARGVRGARGGAQQQRGRG) is interaction with SMN. Residues 526 to 528 (RGG) form a 1-5 repeat. Tandem repeats lie at residues 539-541 (RGG), 554-556 (RGG), and 557-559 (RGG). The segment covering 550 to 562 (VRGARGGRGGNVG) has biased composition (gly residues). A Bipartite nuclear localization signal motif is present at residues 564 to 578 (KRKADGYNQPDSKRR). The span at 580-595 (TNNQNWGSQPIAQQPL) shows a compositional bias: polar residues. A Phosphoserine modification is found at Ser-587. Residue Lys-607 forms a Glycyl lysine isopeptide (Lys-Gly) (interchain with G-Cter in SUMO2) linkage. Residues 611–623 (QEFYQDTFGQQWK) show a composition bias toward polar residues.

Isoform 1 is a component of the APOB mRNA editosome complex and interacts with APOBEC1 and A1CF (APOBEC1 complementation factor). Part of a complex associated with the FOS mCRD domain and consisting of PABPC1, PAIP1, CSDE1/UNR, HNRPD and SYNCRIP. Isoform 3 interacts with HNRPR. Interacts with POLR2A hyperphosphorylated C-terminal domain. Isoform 1, isoform 2 and isoform 3 interact with SMN. Isoform 3 interacts through its C-terminal domain with SYT7, SYT8 and SYT9. The non-phosphorylated and phosphorylated forms are colocalized with PAIP1 in polysomes. Interacts with HABP4. Identified in a histone pre-mRNA complex, at least composed of ERI1, LSM11, SLBP, SNRPB, SYNCRIP and YBX1. Identified in the spliceosome C complex. Component of the coding region determinant (CRD)-mediated complex, composed of DHX9, HNRNPU, IGF2BP1, SYNCRIP and YBX1. Identified in a mRNP complex, at least composed of DHX9, DDX3X, ELAVL1, HNRNPU, IGF2BP1, ILF3, PABPC1, PCBP2, PTBP2, STAU1, STAU2, SYNCRIP and YBX1. Identified in a mRNP granule complex, at least composed of ACTB, ACTN4, DHX9, ERG, HNRNPA1, HNRNPA2B1, HNRNPAB, HNRNPD, HNRNPL, HNRNPR, HNRNPU, HSPA1, HSPA8, IGF2BP1, ILF2, ILF3, NCBP1, NCL, PABPC1, PABPC4, PABPN1, RPLP0, RPS3, RPS3A, RPS4X, RPS8, RPS9, SYNCRIP, YBX1 and untranslated mRNAs. Interacts with GTPBP1. Component of the GAIT complex; in humans the complex assembly seems to be a two-step process in which EPRS1 first associates with SYNCRIP to form a pre-GAIT complex which is deficient in GAIT element binding. In terms of assembly, (Microbial infection) Interacts with minute virus of mice (MVM) NS1 protein. As to quaternary structure, (Microbial infection) Interacts with herpes virus 8/HHV-8 protein vIRF-1; this interaction induces ubiquitination and degradation of SYNCRIP. In terms of processing, phosphorylated on tyrosine. The membrane-bound form found in microsomes is phosphorylated in vitro by insulin receptor tyrosine kinase (INSR). Phosphorylation is inhibited upon binding to RNA, whereas the cytoplasmic form is poorly phosphorylated. Ubiquitously expressed. Detected in heart, brain, pancreas, placenta, spleen, lung, liver, skeletal muscle, kidney, thymus, prostate, uterus, small intestine, colon, peripheral blood and testis.

The protein localises to the cytoplasm. Its subcellular location is the microsome. It localises to the endoplasmic reticulum. The protein resides in the nucleus. It is found in the nucleoplasm. Functionally, heterogenous nuclear ribonucleoprotein (hnRNP) implicated in mRNA processing mechanisms. Component of the CRD-mediated complex that promotes MYC mRNA stability. Isoform 1, isoform 2 and isoform 3 are associated in vitro with pre-mRNA, splicing intermediates and mature mRNA protein complexes. Isoform 1 binds to apoB mRNA AU-rich sequences. Isoform 1 is part of the APOB mRNA editosome complex and may modulate the postranscriptional C to U RNA-editing of the APOB mRNA through either by binding to A1CF (APOBEC1 complementation factor), to APOBEC1 or to RNA itself. May be involved in translationally coupled mRNA turnover. Implicated with other RNA-binding proteins in the cytoplasmic deadenylation/translational and decay interplay of the FOS mRNA mediated by the major coding-region determinant of instability (mCRD) domain. Interacts in vitro preferentially with poly(A) and poly(U) RNA sequences. Isoform 3 may be involved in cytoplasmic vesicle-based mRNA transport through interaction with synaptotagmins. Component of the GAIT (gamma interferon-activated inhibitor of translation) complex which mediates interferon-gamma-induced transcript-selective translation inhibition in inflammation processes. Upon interferon-gamma activation assembles into the GAIT complex which binds to stem loop-containing GAIT elements in the 3'-UTR of diverse inflammatory mRNAs (such as ceruplasmin) and suppresses their translation; seems not to be essential for GAIT complex function. This Homo sapiens (Human) protein is Heterogeneous nuclear ribonucleoprotein Q (SYNCRIP).